The following is a 1709-amino-acid chain: Sialoadhesin (1709 aa).

A signal peptide spans M1–A19. The region spanning S20–T136 is the Ig-like V-type domain. Topologically, residues S20–Q1641 are extracellular. Cystine bridges form between C36–C166, C41–C98, C160–C217, and C262–C305. N-acetylneuraminate-binding positions include Y63, R116, and V122–S126. Ig-like C2-type domains are found at residues P139 to Q233, P238 to S320, A326 to S405, P411 to H507, A511 to T593, P601 to N705, A708 to S785, P799 to R894, V898 to S977, P984 to D1083, Q1085 to T1165, and R1176 to G1248. An N-linked (GlcNAc...) asparagine glycan is attached at N159. Residues N265 and N339 are each glycosylated (N-linked (GlcNAc...) asparagine). Disulfide bonds link C346–C390 and C433–C491. N-linked (GlcNAc...) asparagine glycosylation occurs at N499. 2 cysteine pairs are disulfide-bonded: C531-C575 and C624-C689. N-linked (GlcNAc...) asparagine glycans are attached at residues N697, N726, N730, and N741. 2 cysteine pairs are disulfide-bonded: C729–C774 and C817–C876. The N-linked (GlcNAc...) asparagine glycan is linked to N886. Intrachain disulfides connect C916-C960 and C1005-C1067. N1104 and N1138 each carry an N-linked (GlcNAc...) asparagine glycan. Cystine bridges form between C1107–C1149 and C1193–C1241. The N-linked (GlcNAc...) asparagine glycan is linked to N1251. 4 Ig-like C2-type domains span residues E1259 to Q1341, V1350 to V1442, A1445 to R1528, and P1536 to R1631. Cystine bridges form between C1281–C1324 and C1367–C1425. Residues N1462 and N1476 are each glycosylated (N-linked (GlcNAc...) asparagine). Disulfide bonds link C1465/C1511 and C1554/C1613. Residues L1642–C1662 traverse the membrane as a helical segment. Topologically, residues Y1663–G1709 are cytoplasmic.

This sequence belongs to the immunoglobulin superfamily. SIGLEC (sialic acid binding Ig-like lectin) family. Interacts with TYROBP. Interacts with CLEC10A. As to expression, expressed by macrophages in various tissues. High levels are found in spleen, lymph node, perivascular macrophages in brain and lower levels in bone marrow, liver Kupffer cells and lamina propria of colon and lung. Also expressed by inflammatory macrophages in rheumatoid arthritis.

Its subcellular location is the cell membrane. It is found in the secreted. Functionally, macrophage-restricted adhesion molecule that mediates sialic-acid dependent binding to lymphocytes, including granulocytes, monocytes, natural killer cells, B-cells and CD8 T-cells. Plays a crucial role in limiting bacterial dissemination by engaging sialylated bacteria to promote effective phagocytosis and antigen presentation for the adaptive immune response. Mediates the uptake of various enveloped viruses via sialic acid recognition and subsequently induces the formation of intracellular compartments filled with virions (VCCs). In turn, enhances macrophage-to-T-cell transmission of several viruses including HIV-1 or SARS-CoV-2. Acts as an endocytic receptor mediating clathrin dependent endocytosis. Preferentially binds to alpha-2,3-linked sialic acid. Binds to SPN/CD43 on T-cells. May play a role in hemopoiesis. Plays a role in the inhibition of antiviral innate immune by promoting TBK1 degradation via TYROBP and TRIM27-mediated ubiquitination. Its function is as follows. (Microbial infection) Facilitates viral cytoplasmic entry into activated dendritic cells via recognition of sialylated gangliosides pesent on viral membrane. The protein is Sialoadhesin (SIGLEC1) of Homo sapiens (Human).